The primary structure comprises 159 residues: SsrA-binding protein (159 aa).

A compositionally biased stretch (basic and acidic residues) spans 137–147 (LAERQANRETE). Positions 137-159 (LAERQANRETEQAVGRRLKGMHD) are disordered.

This sequence belongs to the SmpB family.

It localises to the cytoplasm. In terms of biological role, required for rescue of stalled ribosomes mediated by trans-translation. Binds to transfer-messenger RNA (tmRNA), required for stable association of tmRNA with ribosomes. tmRNA and SmpB together mimic tRNA shape, replacing the anticodon stem-loop with SmpB. tmRNA is encoded by the ssrA gene; the 2 termini fold to resemble tRNA(Ala) and it encodes a 'tag peptide', a short internal open reading frame. During trans-translation Ala-aminoacylated tmRNA acts like a tRNA, entering the A-site of stalled ribosomes, displacing the stalled mRNA. The ribosome then switches to translate the ORF on the tmRNA; the nascent peptide is terminated with the 'tag peptide' encoded by the tmRNA and targeted for degradation. The ribosome is freed to recommence translation, which seems to be the essential function of trans-translation. This is SsrA-binding protein from Nocardioides sp. (strain ATCC BAA-499 / JS614).